The sequence spans 716 residues: DNA ligase (716 aa).

NAD(+)-binding positions include 49-53, 98-99, and E132; these read DAAYD and SL. K134 (N6-AMP-lysine intermediate) is an active-site residue. NAD(+) is bound by residues R155, E192, K308, and K332. Zn(2+) contacts are provided by C437, C439, C461, and C467. A BRCT domain is found at 638 to 716; the sequence is KRNSPIATKT…EDEWLQLIGE (79 aa).

The protein belongs to the NAD-dependent DNA ligase family. LigA subfamily. It depends on Mg(2+) as a cofactor. Mn(2+) serves as cofactor.

It catalyses the reaction NAD(+) + (deoxyribonucleotide)n-3'-hydroxyl + 5'-phospho-(deoxyribonucleotide)m = (deoxyribonucleotide)n+m + AMP + beta-nicotinamide D-nucleotide.. Its function is as follows. DNA ligase that catalyzes the formation of phosphodiester linkages between 5'-phosphoryl and 3'-hydroxyl groups in double-stranded DNA using NAD as a coenzyme and as the energy source for the reaction. It is essential for DNA replication and repair of damaged DNA. The protein is DNA ligase of Bradyrhizobium sp. (strain ORS 278).